Consider the following 318-residue polypeptide: Acetyl-coenzyme A carboxylase carboxyl transferase subunit alpha (318 aa).

One can recognise a CoA carboxyltransferase C-terminal domain in the interval 41–295 (HLEKKNEELT…KQRILTDLNE (255 aa)).

Belongs to the AccA family. In terms of assembly, acetyl-CoA carboxylase is a heterohexamer composed of biotin carboxyl carrier protein (AccB), biotin carboxylase (AccC) and two subunits each of ACCase subunit alpha (AccA) and ACCase subunit beta (AccD).

It is found in the cytoplasm. The catalysed reaction is N(6)-carboxybiotinyl-L-lysyl-[protein] + acetyl-CoA = N(6)-biotinyl-L-lysyl-[protein] + malonyl-CoA. It participates in lipid metabolism; malonyl-CoA biosynthesis; malonyl-CoA from acetyl-CoA: step 1/1. Functionally, component of the acetyl coenzyme A carboxylase (ACC) complex. First, biotin carboxylase catalyzes the carboxylation of biotin on its carrier protein (BCCP) and then the CO(2) group is transferred by the carboxyltransferase to acetyl-CoA to form malonyl-CoA. This is Acetyl-coenzyme A carboxylase carboxyl transferase subunit alpha from Tolumonas auensis (strain DSM 9187 / NBRC 110442 / TA 4).